Consider the following 329-residue polypeptide: Beta-ketoacyl-[acyl-carrier-protein] synthase III (329 aa).

Active-site residues include cysteine 114 and histidine 255. Residues glutamine 256–arginine 260 form an ACP-binding region. Asparagine 285 is a catalytic residue.

This sequence belongs to the thiolase-like superfamily. FabH family. Homodimer.

The protein localises to the cytoplasm. It carries out the reaction malonyl-[ACP] + acetyl-CoA + H(+) = 3-oxobutanoyl-[ACP] + CO2 + CoA. It participates in lipid metabolism; fatty acid biosynthesis. Functionally, catalyzes the condensation reaction of fatty acid synthesis by the addition to an acyl acceptor of two carbons from malonyl-ACP. Catalyzes the first condensation reaction which initiates fatty acid synthesis and may therefore play a role in governing the total rate of fatty acid production. Possesses both acetoacetyl-ACP synthase and acetyl transacylase activities. Its substrate specificity determines the biosynthesis of branched-chain and/or straight-chain of fatty acids. In Thermosynechococcus vestitus (strain NIES-2133 / IAM M-273 / BP-1), this protein is Beta-ketoacyl-[acyl-carrier-protein] synthase III.